Consider the following 203-residue polypeptide: MSRYTGPSWKKSRRLGLSLTGTGKELARRNYVPGQHGPNNRSKLSEYGLQLAEKQKLRFSYGLGEKQFRNLFVQATKIKGGILGYNFMLLLERRLDNVVYRLGLATTRRQARQFVNHGHILVDGKRVDIPSYRVEVGQVISVREKSAKVPAILEAVESVVGRPAFVSFDADKLEGSLTRLPERDEINPEINEALVVEFYNKML.

The S4 RNA-binding domain occupies 93-156 (RRLDNVVYRL…AKVPAILEAV (64 aa)).

The protein belongs to the universal ribosomal protein uS4 family. In terms of assembly, part of the 30S ribosomal subunit. Contacts protein S5. The interaction surface between S4 and S5 is involved in control of translational fidelity.

One of the primary rRNA binding proteins, it binds directly to 16S rRNA where it nucleates assembly of the body of the 30S subunit. Its function is as follows. With S5 and S12 plays an important role in translational accuracy. The sequence is that of Small ribosomal subunit protein uS4 from Streptococcus mutans serotype c (strain ATCC 700610 / UA159).